The following is a 144-amino-acid chain: uncharacterized protein (144 aa).

The N-terminal stretch at 1–16 (MRKFLIVLLLPLLVLA) is a signal peptide.

This is an uncharacterized protein from Aquifex aeolicus (strain VF5).